The following is a 479-amino-acid chain: MSFQAPRRLLELAGQSLLRDQALAISVLDELPRELFPRLFVEAFTSRCCEVLKVMVQAWPFPCLPLGSLMKTPDLEILHYVVDGIDCLLAQKVRPRRWKLQVLEMRDVDENFWTIWSGARPLSCSPEAMSKRQTVEDCPRTGEKQPLKVFMDVCLKEKSVDEDLSFFSGWVQHRRRSVHLCCTKVVNYSMNILNFRNILETVYPDSIQVLEIWNMCWPCMVAEVSRYLSQMKNLRKLFISDGCGYLPSFESQGQLVAEFSSVFLRLEYLQMLYMRRIRFFEGYLDQLIRCLKSPLETLALTYGSLDEEDLKCLPWYPSLSQLKQLNLSHGTLRFIRLEPLRALLEKVAATLQTLFLVDCGIGDSKLRVILPALSRCSNLTTFCFHGNDTSMDGLKDLLRHTGRLSNLSLETYPAPRESLDNRGRVISELLTPLQAELMRILREVREPNRIFFGPVSCPCCGMSPTEQLEFNFCLRGRPA.

An LRR 1 repeat occupies 15 to 38 (QSLLRDQALAISVLDELPRELFPR). Residues 97–124 (RWKLQVLEMRDVDENFWTIWSGARPLSC) form an LRR 1; degenerate repeat. An LRR 2; degenerate repeat occupies 179 to 203 (HLCCTKVVNYSMNILNFRNILETVY). The LRR 3; degenerate repeat unit spans residues 204-230 (PDSIQVLEIWNMCWPCMVAEVSRYLSQ). An LRR 4; degenerate repeat occupies 231-265 (MKNLRKLFISDGCGYLPSFESQGQLVAEFSSVFLR). LRR repeat units lie at residues 266-291 (LEYL…IRCL), 292-323 (KSPL…SQLK), 324-342 (QLNL…PLRA), 348-375 (AATL…ALSR), and 376-400 (CSNL…LLRH).

It belongs to the PRAME family.

In Homo sapiens (Human), this protein is PRAME family member 19.